The primary structure comprises 3655 residues: NuA4 acetyltransferase complex subunit Tra2 (3655 aa).

The interval serine 8 to lysine 2459 is HEAT. 26 HEAT repeats span residues glutamine 46–arginine 89, glutamine 94–phenylalanine 131, threonine 149–glutamine 188, proline 230–phenylalanine 268, leucine 300–threonine 338, serine 374–leucine 412, phenylalanine 438–serine 475, isoleucine 606–serine 643, lysine 644–serine 683, serine 735–leucine 772, proline 783–aspartate 820, proline 828–lysine 867, alanine 1100–serine 1141, aspartate 1147–arginine 1184, glutamate 1193–threonine 1230, arginine 1429–leucine 1470, asparagine 1665–lysine 1704, glycine 1709–alanine 1746, isoleucine 1753–valine 1790, glutamine 1808–serine 1846, glutamate 1891–leucine 1934, serine 1973–asparagine 2011, glutamate 2036–threonine 2073, aspartate 2120–valine 2157, aspartate 2183–valine 2221, and aspartate 2401–proline 2438. The interval threonine 2460–leucine 3655 is head. In terms of domain architecture, FAT spans leucine 2484–aspartate 3045. The segment at arginine 3059–lysine 3105 is disordered. Basic and acidic residues predominate over residues arginine 3063–aspartate 3077. Positions leucine 3078–serine 3092 are enriched in low complexity. Positions valine 3285 to leucine 3625 constitute a PI3K/PI4K catalytic domain. Positions valine 3291–cysteine 3297 are G-loop. The interval asparagine 3491–lysine 3499 is catalytic loop. Positions serine 3511–threonine 3536 are activation loop. An FATC domain is found at glutamate 3623–leucine 3655.

Belongs to the PI3/PI4-kinase family. TRA1 subfamily. In terms of assembly, component of the NuA4 acetyltransferase complex. Tra1 is the scaffold subunit for binding to a variety of transcription activators or transcription factors to recruit NuA4 for targeted gene activation. Requires Hsp90 and its co-chaperone, the Triple-T complex (TTT), for its incorporation into NuA4. Interacts with tel2.

Its function is as follows. Component of the NuA4 histone H4/H2A acetyltransferase involved in transcription and DNA repair. In Schizosaccharomyces pombe (strain 972 / ATCC 24843) (Fission yeast), this protein is NuA4 acetyltransferase complex subunit Tra2.